The following is a 216-amino-acid chain: Dephospho-CoA kinase (216 aa).

A DPCK domain is found at 18–216; it reads IIGVIGPPCS…SELASVLQSK (199 aa). 26-31 contacts ATP; that stretch reads CSGKST.

This sequence belongs to the CoaE family.

It localises to the cytoplasm. The enzyme catalyses 3'-dephospho-CoA + ATP = ADP + CoA + H(+). It functions in the pathway cofactor biosynthesis; coenzyme A biosynthesis; CoA from (R)-pantothenate: step 5/5. In terms of biological role, catalyzes the phosphorylation of the 3'-hydroxyl group of dephosphocoenzyme A to form coenzyme A. The polypeptide is Dephospho-CoA kinase (Rhodopirellula baltica (strain DSM 10527 / NCIMB 13988 / SH1)).